Here is a 503-residue protein sequence, read N- to C-terminus: MSEAPVHQRKVAFIHPDLGIGGAERLVVDAAAGLQNAGYDVTIYTSHCDKSHCFEEVKNGTLKVEVRGDALPTHIFGKFSILCANLRQLYLTWNLISTGKIEEYDVYIVDQLSSCVPLLHLNAPDSKVLFYCHFPDQLLARRDGLLKKLYRIPFDILEQFTMGVADTILVNSNFTKQVFAKTFQSLAVDPKVVYPCVNVEQEEILPLDKDLMKKILKNNEKYYLSINRYERKKNIELAITAFAQSKQRTSHKLFISGGYDLNNSENIDYLKELETLATELKLKHVHLSYPEYSKSPDKCPSSNFADAQILFLTSVSSSLKELLLQSTEMLLYTPSNEHFGIVPLEAMKYGVPVLAVDTGGPLETVVDYNETPSHIDATGWLRPSDADEWSKVLDQSVDIFEKNHSLFEVNGPKRIKYYFSREAMSKNFDNTIDHIIWKSRGTRLWSTLAPGLLMFTVQYATLLITGDASWPYLLLAAISYFVLRSVKATVYWIIVFCYLNYST.

Residues asparagine 59, asparagine 173, asparagine 262, and asparagine 403 are each glycosylated (N-linked (GlcNAc...) asparagine). 2 consecutive transmembrane segments (helical) span residues 444 to 466 (LWST…LITG) and 473 to 495 (LLLA…WIIV). Asparagine 500 carries an N-linked (GlcNAc...) asparagine glycan.

This sequence belongs to the glycosyltransferase group 1 family.

The protein localises to the endoplasmic reticulum membrane. The catalysed reaction is a beta-D-Man-(1-&gt;4)-beta-D-GlcNAc-(1-&gt;4)-alpha-D-GlcNAc-diphospho-di-trans,poly-cis-dolichol + GDP-alpha-D-mannose = an alpha-D-Man-(1-&gt;3)-beta-D-Man-(1-&gt;4)-beta-D-GlcNAc-(1-&gt;4)-alpha-D-GlcNAc-diphospho-di-trans,poly-cis-dolichol + GDP + H(+). The enzyme catalyses an alpha-D-Man-(1-&gt;3)-beta-D-Man-(1-&gt;4)-beta-D-GlcNAc-(1-&gt;4)-alpha-D-GlcNAc-diphospho-di-trans,poly-cis-dolichol + GDP-alpha-D-mannose = an alpha-D-Man-(1-&gt;3)-[alpha-D-Man-(1-&gt;6)]-beta-D-Man-(1-&gt;4)-beta-D-GlcNAc-(1-&gt;4)-alpha-D-GlcNAc-diphospho-di-trans,poly-cis-dolichol + GDP + H(+). It functions in the pathway protein modification; protein glycosylation. Its function is as follows. Mannosylates Man(2)GlcNAc(2)-dolichol diphosphate and Man(1)GlcNAc(2)-dolichol diphosphate to form Man(3)GlcNAc(2)-dolichol diphosphate. The polypeptide is Alpha-1,3/1,6-mannosyltransferase ALG2 (ALG2) (Kluyveromyces lactis (strain ATCC 8585 / CBS 2359 / DSM 70799 / NBRC 1267 / NRRL Y-1140 / WM37) (Yeast)).